The primary structure comprises 518 residues: Putative transposase for insertion sequence IS408 (518 aa).

Positions 11-94 (LKEVLRLKWA…PDYTALHREL (84 aa)) constitute an HTH IS408-type domain. Residues 23 to 44 (LTHRQISRAIGISVGAVSKFAA) constitute a DNA-binding region (H-T-H motif). One can recognise an Integrase catalytic domain in the interval 140 to 335 (QQHRAGEKLF…LPVRRYEIAT (196 aa)). Residues 496 to 518 (LPTTPAEWRSPEHENVRGPDYYH) form a disordered region. The segment covering 504-518 (RSPEHENVRGPDYYH) has biased composition (basic and acidic residues).

It belongs to the transposase IS21/IS408/IS1162 family.

Required for the transposition of the insertion element. This is Putative transposase for insertion sequence IS408 from Burkholderia multivorans (strain ATCC 17616 / 249).